Consider the following 157-residue polypeptide: MMDVLMYLFETYIHSDIELTVDQEKLEDELLKAGFHQEAIYKALDWLEDLAHLQETDSHEHIAKSTSTAMRIYTQQEIDGIDTVCRGFLLFLEQIKVLTCETREMVIEQVMTLETEDLSLDDLKWVILMVLFNVPGQESAYTQMEELLYTSDTGMTH.

It belongs to the Smg family.

This Aliivibrio salmonicida (strain LFI1238) (Vibrio salmonicida (strain LFI1238)) protein is Protein Smg homolog.